A 354-amino-acid chain; its full sequence is Lysophosphatidic acid receptor 3 (354 aa).

The Extracellular segment spans residues 1 to 31; the sequence is MNECHYDKRMDFFYNRSNTDTADEWTGTKLV. The N-linked (GlcNAc...) asparagine glycan is linked to Asn15. Residues 32 to 52 form a helical membrane-spanning segment; that stretch reads IVLCVGTFFCLFIFFSNSLVI. Over 53 to 67 the chain is Cytoplasmic; sequence AAVITNRKFHFPFYY. A helical membrane pass occupies residues 68-88; the sequence is LLANLAAADFFAGIAYVFLMF. At 89 to 101 the chain is on the extracellular side; that stretch reads NTGPVSKTLTVNR. A helical transmembrane segment spans residues 102–124; it reads WFLRQGLLDTSLTASLANLLVIA. Residues 125 to 146 lie on the Cytoplasmic side of the membrane; it reads VERHMSIMRMRVHSNLTKKRVT. Residues 147–167 traverse the membrane as a helical segment; that stretch reads LLILLVWAIAIFMGAVPTLGW. The Extracellular segment spans residues 168–186; it reads NCLCNISACSSLAPIYSRS. The N-linked (GlcNAc...) asparagine glycan is linked to Asn172. A helical membrane pass occupies residues 187–207; the sequence is YLIFWTVSNLLAFFIMVAVYV. Topologically, residues 208-240 are cytoplasmic; the sequence is RIYMYVKRKTNVLSPHTSGSISRRRAPMKLMKT. A helical transmembrane segment spans residues 241-261; that stretch reads VMTVLGAFVVCWTPGLVVLLL. Residues 262-276 lie on the Extracellular side of the membrane; it reads DGLNCKQCNVQHVKR. Residues 277–295 form a helical membrane-spanning segment; it reads WFLLLALLNSVMNPIIYSY. The Cytoplasmic portion of the chain corresponds to 296-354; it reads KDEDMYNTMRKMICCALQDSNTERRPSRNPSTIHSRSETGSQYLEDSISQGPVCNKNGS. A lipid anchor (S-palmitoyl cysteine) is attached at Cys309. A disordered region spans residues 315–354; the sequence is SNTERRPSRNPSTIHSRSETGSQYLEDSISQGPVCNKNGS. Positions 323 to 354 are enriched in polar residues; the sequence is RNPSTIHSRSETGSQYLEDSISQGPVCNKNGS.

Belongs to the G-protein coupled receptor 1 family. Most abundantly expressed in testes, kidney, and lung, with moderate levels in small intestine, and low levels in heart, stomach, spleen, and adult and perinatal brain. Little or no expression in embryonic brain, liver, or thymus.

The protein resides in the cell membrane. Its function is as follows. Receptor for lysophosphatidic acid (LPA), a mediator of diverse cellular activities. Seems to be coupled to the G(i)/G(o) and G(q) families of heteromeric G proteins. The sequence is that of Lysophosphatidic acid receptor 3 (Lpar3) from Mus musculus (Mouse).